The following is a 1035-amino-acid chain: Beta-galactosidase (1035 aa).

Positions 101 and 199 each coordinate substrate. Na(+) is bound at residue D199. Mg(2+) is bound by residues E415, H417, and E460. Substrate contacts are provided by residues E460 and 540–543 (EYAH). E460 (proton donor) is an active-site residue. Catalysis depends on E540, which acts as the Nucleophile. N600 provides a ligand contact to Mg(2+). F604 and N607 together coordinate Na(+). 2 residues coordinate substrate: N607 and W1011.

The protein belongs to the glycosyl hydrolase 2 family. As to quaternary structure, homotetramer. The cofactor is Mg(2+). Na(+) serves as cofactor.

It carries out the reaction Hydrolysis of terminal non-reducing beta-D-galactose residues in beta-D-galactosides.. The sequence is that of Beta-galactosidase from Psychromonas ingrahamii (strain DSM 17664 / CCUG 51855 / 37).